We begin with the raw amino-acid sequence, 163 residues long: ATP synthase subunit b 1 (163 aa).

Residues 5-25 form a helical membrane-spanning segment; that stretch reads FDATFFAFVGLILFLALVVYL.

The protein belongs to the ATPase B chain family. As to quaternary structure, F-type ATPases have 2 components, F(1) - the catalytic core - and F(0) - the membrane proton channel. F(1) has five subunits: alpha(3), beta(3), gamma(1), delta(1), epsilon(1). F(0) has three main subunits: a(1), b(2) and c(10-14). The alpha and beta chains form an alternating ring which encloses part of the gamma chain. F(1) is attached to F(0) by a central stalk formed by the gamma and epsilon chains, while a peripheral stalk is formed by the delta and b chains.

The protein resides in the cell inner membrane. F(1)F(0) ATP synthase produces ATP from ADP in the presence of a proton or sodium gradient. F-type ATPases consist of two structural domains, F(1) containing the extramembraneous catalytic core and F(0) containing the membrane proton channel, linked together by a central stalk and a peripheral stalk. During catalysis, ATP synthesis in the catalytic domain of F(1) is coupled via a rotary mechanism of the central stalk subunits to proton translocation. Its function is as follows. Component of the F(0) channel, it forms part of the peripheral stalk, linking F(1) to F(0). This Rhizobium etli (strain ATCC 51251 / DSM 11541 / JCM 21823 / NBRC 15573 / CFN 42) protein is ATP synthase subunit b 1.